A 158-amino-acid chain; its full sequence is Transcription elongation factor GreA (158 aa).

Residues 46–66 adopt a coiled-coil conformation; the sequence is AEYEAAKERQGFIEGRISELE.

This sequence belongs to the GreA/GreB family.

In terms of biological role, necessary for efficient RNA polymerase transcription elongation past template-encoded arresting sites. The arresting sites in DNA have the property of trapping a certain fraction of elongating RNA polymerases that pass through, resulting in locked ternary complexes. Cleavage of the nascent transcript by cleavage factors such as GreA or GreB allows the resumption of elongation from the new 3'terminus. GreA releases sequences of 2 to 3 nucleotides. The protein is Transcription elongation factor GreA of Neisseria meningitidis serogroup A / serotype 4A (strain DSM 15465 / Z2491).